A 500-amino-acid chain; its full sequence is Histidine ammonia-lyase (500 aa).

A cross-link (5-imidazolinone (Ala-Gly)) is located at residues 141 to 143; that stretch reads ASG. Position 142 is a 2,3-didehydroalanine (Ser) (Ser-142).

The protein belongs to the PAL/histidase family. Contains an active site 4-methylidene-imidazol-5-one (MIO), which is formed autocatalytically by cyclization and dehydration of residues Ala-Ser-Gly.

The protein resides in the cytoplasm. It carries out the reaction L-histidine = trans-urocanate + NH4(+). It functions in the pathway amino-acid degradation; L-histidine degradation into L-glutamate; N-formimidoyl-L-glutamate from L-histidine: step 1/3. This is Histidine ammonia-lyase from Shouchella clausii (strain KSM-K16) (Alkalihalobacillus clausii).